A 171-amino-acid chain; its full sequence is 3-hydroxydecanoyl-[acyl-carrier-protein] dehydratase (171 aa).

The active site involves histidine 71.

Belongs to the thioester dehydratase family. FabA subfamily. Homodimer.

Its subcellular location is the cytoplasm. The catalysed reaction is a (3R)-hydroxyacyl-[ACP] = a (2E)-enoyl-[ACP] + H2O. It catalyses the reaction (3R)-hydroxydecanoyl-[ACP] = (2E)-decenoyl-[ACP] + H2O. The enzyme catalyses (2E)-decenoyl-[ACP] = (3Z)-decenoyl-[ACP]. Its pathway is lipid metabolism; fatty acid biosynthesis. Functionally, necessary for the introduction of cis unsaturation into fatty acids. Catalyzes the dehydration of (3R)-3-hydroxydecanoyl-ACP to E-(2)-decenoyl-ACP and then its isomerization to Z-(3)-decenoyl-ACP. Can catalyze the dehydratase reaction for beta-hydroxyacyl-ACPs with saturated chain lengths up to 16:0, being most active on intermediate chain length. This is 3-hydroxydecanoyl-[acyl-carrier-protein] dehydratase from Sinorhizobium fredii (strain NBRC 101917 / NGR234).